Consider the following 127-residue polypeptide: Large ribosomal subunit protein bL20 (127 aa).

The protein belongs to the bacterial ribosomal protein bL20 family.

Its function is as follows. Binds directly to 23S ribosomal RNA and is necessary for the in vitro assembly process of the 50S ribosomal subunit. It is not involved in the protein synthesizing functions of that subunit. This Akkermansia muciniphila (strain ATCC BAA-835 / DSM 22959 / JCM 33894 / BCRC 81048 / CCUG 64013 / CIP 107961 / Muc) protein is Large ribosomal subunit protein bL20.